Consider the following 347-residue polypeptide: Anthranilate phosphoribosyltransferase (347 aa).

Residues G88, 91-92 (GD), T96, 98-101 (NIST), 116-124 (KHGNRAASS), and S128 each bind 5-phospho-alpha-D-ribose 1-diphosphate. G88 contributes to the anthranilate binding site. A Mg(2+)-binding site is contributed by S100. Position 119 (N119) interacts with anthranilate. R174 provides a ligand contact to anthranilate. Mg(2+)-binding residues include D233 and E234.

Belongs to the anthranilate phosphoribosyltransferase family. Homodimer. It depends on Mg(2+) as a cofactor.

The enzyme catalyses N-(5-phospho-beta-D-ribosyl)anthranilate + diphosphate = 5-phospho-alpha-D-ribose 1-diphosphate + anthranilate. It participates in amino-acid biosynthesis; L-tryptophan biosynthesis; L-tryptophan from chorismate: step 2/5. Functionally, catalyzes the transfer of the phosphoribosyl group of 5-phosphorylribose-1-pyrophosphate (PRPP) to anthranilate to yield N-(5'-phosphoribosyl)-anthranilate (PRA). This chain is Anthranilate phosphoribosyltransferase, found in Rhodospirillum rubrum (strain ATCC 11170 / ATH 1.1.1 / DSM 467 / LMG 4362 / NCIMB 8255 / S1).